Reading from the N-terminus, the 199-residue chain is Photosystem II D1 precursor processing protein PSB27-H2, chloroplastic (199 aa).

This sequence belongs to the Psb27 family. As to quaternary structure, interacts with the C-terminus of both the precursor and mature form of D1.

Its subcellular location is the plastid. It is found in the chloroplast thylakoid lumen. Its function is as follows. Required, but not essential, for D1 (psbA) precursor processing and thus correct photosystem II assembly (PSII). The sequence is that of Photosystem II D1 precursor processing protein PSB27-H2, chloroplastic (PSB27-2) from Arabidopsis thaliana (Mouse-ear cress).